The primary structure comprises 285 residues: Ret finger protein-like 4A (285 aa).

The RING-type; degenerate zinc finger occupies 11–53 (CYFCFRYLENPVYLNCGYICCFQCLDSLEKSPEGDGVLCPNCS). Residues 78–276 (EPQLNFILTM…ISICPVMNPS (199 aa)) enclose the B30.2/SPRY domain.

In terms of assembly, interacts with PSMB1, UBE2A and CCNB1.

It is found in the cytoplasm. The protein resides in the nucleus. The sequence is that of Ret finger protein-like 4A (Rfpl4a) from Rattus norvegicus (Rat).